We begin with the raw amino-acid sequence, 123 residues long: Large ribosomal subunit protein uL29 (123 aa).

Lysine 19 bears the N6-acetyllysine mark. Lysine 25 is covalently cross-linked (Glycyl lysine isopeptide (Lys-Gly) (interchain with G-Cter in SUMO2)). A Phosphoserine modification is found at serine 29. Lysine 43 is modified (N6-acetyllysine). Positions 85-123 (PKKTRAMRRRLNKHEESLKTKKQQRKERLYPLRKYAVKA) are disordered. A compositionally biased stretch (basic residues) spans 86-96 (KKTRAMRRRLN).

The protein belongs to the universal ribosomal protein uL29 family. In terms of assembly, component of the large ribosomal subunit.

Its subcellular location is the cytoplasm. In terms of biological role, component of the large ribosomal subunit. The ribosome is a large ribonucleoprotein complex responsible for the synthesis of proteins in the cell. The polypeptide is Large ribosomal subunit protein uL29 (RPL35) (Oryctolagus cuniculus (Rabbit)).